We begin with the raw amino-acid sequence, 251 residues long: uncharacterized protein (251 aa).

This is an uncharacterized protein from Mycoplasma pneumoniae (strain ATCC 29342 / M129 / Subtype 1) (Mycoplasmoides pneumoniae).